The sequence spans 148 residues: Transcription antitermination protein NusB (148 aa).

This sequence belongs to the NusB family.

Its function is as follows. Involved in transcription antitermination. Required for transcription of ribosomal RNA (rRNA) genes. Binds specifically to the boxA antiterminator sequence of the ribosomal RNA (rrn) operons. The chain is Transcription antitermination protein NusB from Desulfitobacterium hafniense (strain DSM 10664 / DCB-2).